The primary structure comprises 723 residues: Homeobox protein HAT3.1 (723 aa).

The segment covering 1-10 (MYKAVSKRVT) has biased composition (basic residues). Disordered regions lie at residues 1–94 (MYKA…GSHR) and 135–173 (KRAQ…QVRE). Positions 11-23 (RSSGSGLKQTNVD) are enriched in polar residues. The span at 58 to 83 (LHHEIMDHGKGNEEQKPTPQTVKKDS) shows a compositional bias: basic and acidic residues. The PHD-type zinc-finger motif lies at 265 to 322 (DIFCAKCGSKDLSVDNDIILCDGFCDRGFHQYCLEPPLRKEDIPPDDEGWLCPGCDCK). 2 disordered regions span residues 357 to 628 (GGQN…KTQR) and 680 to 723 (VEKL…RRRK). Positions 365–407 (LPSDDSDDEEYDPDCLNDNENDEDGSDDNEESENEDGSSDETE) are enriched in acidic residues. Residues 417-427 (ESFKEGKDIMK) show a composition bias toward basic and acidic residues. Residues 435–453 (DDSEDDDYDPDAPTCDDDK) are compositionally biased toward acidic residues. Basic and acidic residues-rich tracts occupy residues 518-530 (RNVE…KLYD) and 547-556 (DKTARMGKED). A compositionally biased stretch (basic residues) spans 580-589 (KKLIRKSKRA). Positions 614–673 (SSSSACKQTDPKTQRLYISFQENQYPDKATKESLAKELQMTVKQVNNWFKHRRWSINSKP) form a DNA-binding region, homeobox. Residues 680 to 690 (VEKLKTGKEGE) are compositionally biased toward basic and acidic residues. The span at 695–705 (VAGSSKQTMET) shows a compositional bias: polar residues.

Belongs to the PHD-associated homeobox family. In terms of tissue distribution, primarily detected in root tissue.

Its subcellular location is the nucleus. In terms of biological role, binds only to large DNA fragments. Recognizes a DNA fragment carrying 8 copies of box7 motif of the light-induced cab-E promoter of Nicotiana plumbaginifolia. Also recognizes the box7m1 motif. The protein is Homeobox protein HAT3.1 (HAT3.1) of Arabidopsis thaliana (Mouse-ear cress).